The primary structure comprises 201 residues: MBF complex negative regulatory component yox1 (201 aa).

Polar residues predominate over residues 1 to 22 (MSLSDSPSKSGNTGKDLISNNE). Positions 1-42 (MSLSDSPSKSGNTGKDLISNNEAKNHEDEETHQKKRRRRTTD) are disordered. Residues 23-32 (AKNHEDEETH) are compositionally biased toward basic and acidic residues. Residues 33-92 (QKKRRRRTTDAEATLLEQYFLKTPKPSLIERQELSKKLKSSMTPRELQIWFQNKRQSLRR) constitute a DNA-binding region (homeobox).

As to quaternary structure, component of the MBF transcription factor complex. Phosphorylated in response to hydroxyurea. Phosphorylation inhibits the repressor activity and is dependent on rad3. However, the regulation of yox1 by rad3 is probably indirect.

The protein resides in the nucleus. Functionally, negative regulatory component of the MBF transcription factor complex involved in cell-cycle G1/S phase-specific gene expression and more particularly DNA replication checkpoint-dependent gene expression. This is MBF complex negative regulatory component yox1 (yox1) from Schizosaccharomyces pombe (strain 972 / ATCC 24843) (Fission yeast).